The primary structure comprises 119 residues: Ghilanten (119 aa).

Gln-1 is subject to Pyrrolidone carboxylic acid. 10 disulfide bridges follow: Cys-8–Cys-19, Cys-13–Cys-26, Cys-28–Cys-48, Cys-33–Cys-51, Cys-37–Cys-53, Cys-62–Cys-73, Cys-67–Cys-80, Cys-82–Cys-103, Cys-88–Cys-106, and Cys-92–Cys-108. Residues 28–53 (CPEVRCRVYCSHGFQRSRYGCEVCRC) enclose the Antistasin-like 1 domain. An Antistasin-like 2 domain is found at 83–108 (KIDINCRKTCPNGLKRDKLGCEYCEC). Heparin is bound by residues 97–100 (KRDK) and 111–118 (KRKLVPRL).

The protein belongs to the protease inhibitor I15 (antistasin) family.

It localises to the secreted. Functionally, this highly disulfide-bonded protein is a potent inhibitor of factor Xa. May have therapeutic utility as an anticoagulant. Also exhibits a strong metastatic activity. The protein is Ghilanten of Haementeria ghilianii (Amazon leech).